Here is a 171-residue protein sequence, read N- to C-terminus: ATP synthase subunit b (171 aa).

A helical transmembrane segment spans residues 13–33 (GVEWGTTFVTLVTFVILIILL).

It belongs to the ATPase B chain family. F-type ATPases have 2 components, F(1) - the catalytic core - and F(0) - the membrane proton channel. F(1) has five subunits: alpha(3), beta(3), gamma(1), delta(1), epsilon(1). F(0) has three main subunits: a(1), b(2) and c(10-14). The alpha and beta chains form an alternating ring which encloses part of the gamma chain. F(1) is attached to F(0) by a central stalk formed by the gamma and epsilon chains, while a peripheral stalk is formed by the delta and b chains.

It is found in the cell membrane. Functionally, f(1)F(0) ATP synthase produces ATP from ADP in the presence of a proton or sodium gradient. F-type ATPases consist of two structural domains, F(1) containing the extramembraneous catalytic core and F(0) containing the membrane proton channel, linked together by a central stalk and a peripheral stalk. During catalysis, ATP synthesis in the catalytic domain of F(1) is coupled via a rotary mechanism of the central stalk subunits to proton translocation. In terms of biological role, component of the F(0) channel, it forms part of the peripheral stalk, linking F(1) to F(0). The polypeptide is ATP synthase subunit b (Staphylococcus epidermidis (strain ATCC 12228 / FDA PCI 1200)).